The chain runs to 70 residues: Probable ferredoxin TA0517 (70 aa).

4Fe-4S ferredoxin-type domains are found at residues 8-36 and 37-66; these read TEMD…WLDE and TVIK…AEWF. [4Fe-4S] cluster contacts are provided by Cys-17, Cys-20, Cys-23, Cys-27, Cys-46, Cys-49, Cys-52, and Cys-56.

Requires [4Fe-4S] cluster as cofactor.

Functionally, ferredoxins are iron-sulfur proteins that transfer electrons in a wide variety of metabolic reactions. The sequence is that of Probable ferredoxin TA0517 from Thermoplasma acidophilum (strain ATCC 25905 / DSM 1728 / JCM 9062 / NBRC 15155 / AMRC-C165).